The chain runs to 373 residues: Centrosomal protein of 41 kDa (373 aa).

The segment at 89 to 137 is disordered; sequence QRLEDNDSAASDPDAETTARTNGKGNPGEQSPSPEQFINNAGAGDSSRS. Residues Ser96 and Ser99 each carry the phosphoserine modification. Residues 106–127 show a composition bias toward polar residues; it reads TARTNGKGNPGEQSPSPEQFIN. Position 109 is a phosphothreonine (Thr109). Phosphoserine is present on Ser121. Residues 169 to 266 enclose the Rhodanese domain; it reads PDCPFLLLDV…LAQKFPEGLI (98 aa). The interval 275-373 is disordered; it reads QQALPPGSAR…SGHLQGKPWK (99 aa). The span at 298–312 shows a compositional bias: basic and acidic residues; sequence NKWRFTPEDLKKIEY. Arg343 is subject to Omega-N-methylarginine. A compositionally biased stretch (polar residues) spans 355-366; it reads SHSNPRSLSSGH.

Belongs to the CEP41 family. As to quaternary structure, found in a complex with TTLL6. In terms of tissue distribution, expressed in testis and fetal tissues.

The protein localises to the cytoplasm. The protein resides in the cytoskeleton. It is found in the microtubule organizing center. It localises to the centrosome. Its subcellular location is the cell projection. The protein localises to the cilium. The protein resides in the cilium basal body. In terms of biological role, required during ciliogenesis for tubulin glutamylation in cilium. Probably acts by participating in the transport of TTLL6, a tubulin polyglutamylase, between the basal body and the cilium. The polypeptide is Centrosomal protein of 41 kDa (CEP41) (Homo sapiens (Human)).